The sequence spans 60 residues: LKCNKLVPLFYKTCPAGKNLCYKMFMVSNKMVPVKRGCIDVCPKSSLLVKYVCCNTDRCN.

4 disulfides stabilise this stretch: Cys-3/Cys-21, Cys-14/Cys-38, Cys-42/Cys-53, and Cys-54/Cys-59.

The protein belongs to the three-finger toxin family. Short-chain subfamily. Type IA cytotoxin sub-subfamily. Monomer in solution; Homodimer and oligomer in the presence of negatively charged lipids forming a pore with a size ranging between 20 and 30 Angstroms. Expressed by the venom gland.

It localises to the secreted. Its subcellular location is the target cell membrane. Functionally, basic protein that binds to cell membrane and depolarizes cardiomyocytes. It also possesses lytic activity on many other cells, including red blood cells. Interaction with sulfatides in the cell membrane induces pore formation and cell internalization and is responsible for cytotoxicity in cardiomyocytes. It targets the mitochondrial membrane and induces mitochondrial swelling and fragmentation. Inhibits protein kinases C. It binds to the integrin alpha-V/beta-3 with a moderate affinity. Is cardiotoxic and cytocidal to Yoshida sarcoma cells. The protein is Cytotoxin 5 of Naja atra (Chinese cobra).